Reading from the N-terminus, the 159-residue chain is MPKKIVRVLIEGGKATPGPPLGPALGGLGLNMGQIVKEINEKTSSYSGMRVPVEIEVDTETKKFEIRVGTPPTSMLILRELKAEKGSSDASKKIGNLKMETVVNIAKMKLASSNTPELKQVVKQVLGTALSMGVTVEGKDPREVQREVDSGAWDKLLGG.

Residues 137-149 show a composition bias toward basic and acidic residues; the sequence is EGKDPREVQREVD. The tract at residues 137–159 is disordered; that stretch reads EGKDPREVQREVDSGAWDKLLGG.

This sequence belongs to the universal ribosomal protein uL11 family. Part of the ribosomal stalk of the 50S ribosomal subunit. Interacts with L10 and the large rRNA to form the base of the stalk. L10 forms an elongated spine to which L12 dimers bind in a sequential fashion forming a multimeric L10(L12)X complex.

Functionally, forms part of the ribosomal stalk which helps the ribosome interact with GTP-bound translation factors. This Korarchaeum cryptofilum (strain OPF8) protein is Large ribosomal subunit protein uL11.